We begin with the raw amino-acid sequence, 197 residues long: Holliday junction branch migration complex subunit RuvA (197 aa).

The domain I stretch occupies residues 1–64 (MIASVRGVVQ…EDMLALFGFS (64 aa)). Residues 65–143 (SPAQRALFEL…VATISPQLST (79 aa)) form a domain II region. Residues 144 to 153 (NPGLLALNTE) form a flexible linker region. The domain III stretch occupies residues 153 to 197 (ELIDILTSLGYSTTEAQAALNALPADAPADTEERLRLALQYFGGV).

It belongs to the RuvA family. Homotetramer. Forms an RuvA(8)-RuvB(12)-Holliday junction (HJ) complex. HJ DNA is sandwiched between 2 RuvA tetramers; dsDNA enters through RuvA and exits via RuvB. An RuvB hexamer assembles on each DNA strand where it exits the tetramer. Each RuvB hexamer is contacted by two RuvA subunits (via domain III) on 2 adjacent RuvB subunits; this complex drives branch migration. In the full resolvosome a probable DNA-RuvA(4)-RuvB(12)-RuvC(2) complex forms which resolves the HJ.

It is found in the cytoplasm. The RuvA-RuvB-RuvC complex processes Holliday junction (HJ) DNA during genetic recombination and DNA repair, while the RuvA-RuvB complex plays an important role in the rescue of blocked DNA replication forks via replication fork reversal (RFR). RuvA specifically binds to HJ cruciform DNA, conferring on it an open structure. The RuvB hexamer acts as an ATP-dependent pump, pulling dsDNA into and through the RuvAB complex. HJ branch migration allows RuvC to scan DNA until it finds its consensus sequence, where it cleaves and resolves the cruciform DNA. In Herpetosiphon aurantiacus (strain ATCC 23779 / DSM 785 / 114-95), this protein is Holliday junction branch migration complex subunit RuvA.